Here is a 217-residue protein sequence, read N- to C-terminus: Thiamine-phosphate synthase (217 aa).

Residues 42–46 and Asp-77 each bind 4-amino-2-methyl-5-(diphosphooxymethyl)pyrimidine; that span reads QFRDK. Positions 78 and 97 each coordinate Mg(2+). Ser-117 contacts 4-amino-2-methyl-5-(diphosphooxymethyl)pyrimidine. Position 144–146 (144–146) interacts with 2-[(2R,5Z)-2-carboxy-4-methylthiazol-5(2H)-ylidene]ethyl phosphate; sequence TIS. Lys-147 is a 4-amino-2-methyl-5-(diphosphooxymethyl)pyrimidine binding site. Residues Gly-175 and 195 to 196 each bind 2-[(2R,5Z)-2-carboxy-4-methylthiazol-5(2H)-ylidene]ethyl phosphate; that span reads IT.

It belongs to the thiamine-phosphate synthase family. It depends on Mg(2+) as a cofactor.

The catalysed reaction is 2-[(2R,5Z)-2-carboxy-4-methylthiazol-5(2H)-ylidene]ethyl phosphate + 4-amino-2-methyl-5-(diphosphooxymethyl)pyrimidine + 2 H(+) = thiamine phosphate + CO2 + diphosphate. It catalyses the reaction 2-(2-carboxy-4-methylthiazol-5-yl)ethyl phosphate + 4-amino-2-methyl-5-(diphosphooxymethyl)pyrimidine + 2 H(+) = thiamine phosphate + CO2 + diphosphate. The enzyme catalyses 4-methyl-5-(2-phosphooxyethyl)-thiazole + 4-amino-2-methyl-5-(diphosphooxymethyl)pyrimidine + H(+) = thiamine phosphate + diphosphate. The protein operates within cofactor biosynthesis; thiamine diphosphate biosynthesis; thiamine phosphate from 4-amino-2-methyl-5-diphosphomethylpyrimidine and 4-methyl-5-(2-phosphoethyl)-thiazole: step 1/1. In terms of biological role, condenses 4-methyl-5-(beta-hydroxyethyl)thiazole monophosphate (THZ-P) and 2-methyl-4-amino-5-hydroxymethyl pyrimidine pyrophosphate (HMP-PP) to form thiamine monophosphate (TMP). In Levilactobacillus brevis (strain ATCC 367 / BCRC 12310 / CIP 105137 / JCM 1170 / LMG 11437 / NCIMB 947 / NCTC 947) (Lactobacillus brevis), this protein is Thiamine-phosphate synthase.